The sequence spans 385 residues: uncharacterized protein (385 aa).

Belongs to the mimivirus L17x/L18x family.

This is an uncharacterized protein from Acanthamoeba polyphaga mimivirus (APMV).